Consider the following 359-residue polypeptide: Chorismate synthase (359 aa).

Arg-47 contributes to the NADP(+) binding site. FMN-binding positions include 123 to 125 (RSS), Gly-283, 298 to 302 (KPTSS), and Arg-326.

This sequence belongs to the chorismate synthase family. In terms of assembly, homotetramer. FMNH2 serves as cofactor.

The catalysed reaction is 5-O-(1-carboxyvinyl)-3-phosphoshikimate = chorismate + phosphate. It functions in the pathway metabolic intermediate biosynthesis; chorismate biosynthesis; chorismate from D-erythrose 4-phosphate and phosphoenolpyruvate: step 7/7. Catalyzes the anti-1,4-elimination of the C-3 phosphate and the C-6 proR hydrogen from 5-enolpyruvylshikimate-3-phosphate (EPSP) to yield chorismate, which is the branch point compound that serves as the starting substrate for the three terminal pathways of aromatic amino acid biosynthesis. This reaction introduces a second double bond into the aromatic ring system. In Chlamydia caviae (strain ATCC VR-813 / DSM 19441 / 03DC25 / GPIC) (Chlamydophila caviae), this protein is Chorismate synthase.